A 1140-amino-acid chain; its full sequence is Kinesin-like protein KIN-14O (1140 aa).

The segment covering 1–12 (MLESEFQREHAF) has biased composition (basic and acidic residues). Disordered stretches follow at residues 1 to 37 (MLES…ADDD), 50 to 81 (NPAE…DEDS), 161 to 217 (SPGS…GGHK), and 323 to 347 (ASGT…KEED). The segment covering 161-179 (SPGSSHGGSTPRSPFSPSS) has biased composition (low complexity). Positions 180–193 (PRERHNKGLADSRF) are enriched in basic and acidic residues. Residues 197–209 (LPNSSALDPSSPG) show a composition bias toward polar residues. The stretch at 327-546 (SEENETEKSK…KAKEMEEKSE (220 aa)) forms a coiled coil. Residues 332–347 (TEKSKLEEKKKDKEED) are compositionally biased toward basic and acidic residues. The region spanning 632-952 (NIRVYCRVRP…LKFAERVSGV (321 aa)) is the Kinesin motor domain. 716–723 (GQTGSGKT) provides a ligand contact to ATP. Residues 1002–1018 (LGQSDDFNSEAGDSQLS) are compositionally biased toward polar residues. Disordered stretches follow at residues 1002 to 1021 (LGQS…SIED) and 1028 to 1140 (DYTR…KRWS). Over residues 1066–1078 (EGRKPLKISDKPK) the composition is skewed to basic and acidic residues. A compositionally biased stretch (polar residues) spans 1099 to 1130 (TMRTTNIAKATSALLSPSSQGMKKTGSASNFL).

The protein belongs to the TRAFAC class myosin-kinesin ATPase superfamily. Kinesin family. KIN-14 subfamily.

The protein is Kinesin-like protein KIN-14O of Arabidopsis thaliana (Mouse-ear cress).